The following is a 122-amino-acid chain: Large ribosomal subunit protein bL12 (122 aa).

The protein belongs to the bacterial ribosomal protein bL12 family. In terms of assembly, homodimer. Part of the ribosomal stalk of the 50S ribosomal subunit. Forms a multimeric L10(L12)X complex, where L10 forms an elongated spine to which 2 to 4 L12 dimers bind in a sequential fashion. Binds GTP-bound translation factors.

Functionally, forms part of the ribosomal stalk which helps the ribosome interact with GTP-bound translation factors. Is thus essential for accurate translation. The polypeptide is Large ribosomal subunit protein bL12 (Mycoplasma mycoides subsp. mycoides SC (strain CCUG 32753 / NCTC 10114 / PG1)).